We begin with the raw amino-acid sequence, 116 residues long: UPF0342 protein BH1149 (116 aa).

It belongs to the UPF0342 family.

The sequence is that of UPF0342 protein BH1149 from Halalkalibacterium halodurans (strain ATCC BAA-125 / DSM 18197 / FERM 7344 / JCM 9153 / C-125) (Bacillus halodurans).